A 55-amino-acid chain; its full sequence is ATP synthase F(0) complex subunit 8 (55 aa).

The helical transmembrane segment at 7-29 (NPWFYIMLMSWLTFSLIIQPELL) threads the bilayer.

The protein belongs to the ATPase protein 8 family. In terms of assembly, component of the ATP synthase complex composed at least of ATP5F1A/subunit alpha, ATP5F1B/subunit beta, ATP5MC1/subunit c (homooctomer), MT-ATP6/subunit a, MT-ATP8/subunit 8, ATP5ME/subunit e, ATP5MF/subunit f, ATP5MG/subunit g, ATP5MK/subunit k, ATP5MJ/subunit j, ATP5F1C/subunit gamma, ATP5F1D/subunit delta, ATP5F1E/subunit epsilon, ATP5PF/subunit F6, ATP5PB/subunit b, ATP5PD/subunit d, ATP5PO/subunit OSCP. ATP synthase complex consists of a soluble F(1) head domain (subunits alpha(3) and beta(3)) - the catalytic core - and a membrane F(0) domain - the membrane proton channel (subunits c, a, 8, e, f, g, k and j). These two domains are linked by a central stalk (subunits gamma, delta, and epsilon) rotating inside the F1 region and a stationary peripheral stalk (subunits F6, b, d, and OSCP).

It is found in the mitochondrion membrane. Its function is as follows. Subunit 8, of the mitochondrial membrane ATP synthase complex (F(1)F(0) ATP synthase or Complex V) that produces ATP from ADP in the presence of a proton gradient across the membrane which is generated by electron transport complexes of the respiratory chain. ATP synthase complex consist of a soluble F(1) head domain - the catalytic core - and a membrane F(1) domain - the membrane proton channel. These two domains are linked by a central stalk rotating inside the F(1) region and a stationary peripheral stalk. During catalysis, ATP synthesis in the catalytic domain of F(1) is coupled via a rotary mechanism of the central stalk subunits to proton translocation. In vivo, can only synthesize ATP although its ATP hydrolase activity can be activated artificially in vitro. Part of the complex F(0) domain. The protein is ATP synthase F(0) complex subunit 8 of Musophaga violacea (Violet turaco).